The primary structure comprises 344 residues: GDSL esterase/lipase At1g73610 (344 aa).

The signal sequence occupies residues 1 to 24; it reads MNCLMFFKMLLAFSFISLFYVGNA. An N-linked (GlcNAc...) asparagine glycan is attached at asparagine 30. Serine 42 acts as the Nucleophile in catalysis. Catalysis depends on residues aspartate 319 and histidine 322.

Belongs to the 'GDSL' lipolytic enzyme family.

It localises to the secreted. In Arabidopsis thaliana (Mouse-ear cress), this protein is GDSL esterase/lipase At1g73610.